The sequence spans 382 residues: V-type proton ATPase subunit C 1 (382 aa).

Threonine 2 carries the post-translational modification N-acetylthreonine.

It belongs to the V-ATPase C subunit family. In terms of assembly, V-ATPase is a heteromultimeric enzyme made up of two complexes: the ATP-hydrolytic V1 complex and the proton translocation V0 complex. The V1 complex consists of three catalytic AB heterodimers that form a heterohexamer, three peripheral stalks each consisting of EG heterodimers, one central rotor including subunits D and F, and the regulatory subunits C and H. The proton translocation complex V0 consists of the proton transport subunit a, a ring of proteolipid subunits c9c'', rotary subunit d, subunits e and f, and two accessory subunits.

In terms of biological role, subunit of the V1 complex of vacuolar(H+)-ATPase (V-ATPase), a multisubunit enzyme composed of a peripheral complex (V1) that hydrolyzes ATP and a membrane integral complex (V0) that translocates protons. V-ATPase is responsible for acidifying and maintaining the pH of intracellular compartments and in some cell types, is targeted to the plasma membrane, where it is responsible for acidifying the extracellular environment. Subunit C is necessary for the assembly of the catalytic sector of the enzyme and is likely to have a specific function in its catalytic activity. The protein is V-type proton ATPase subunit C 1 (atp6v1c1) of Xenopus laevis (African clawed frog).